We begin with the raw amino-acid sequence, 294 residues long: Nucleotide-binding protein Swol_0262 (294 aa).

ATP is bound at residue 15–22 (GLSGAGKT). Residue 65–68 (DVRG) coordinates GTP.

This sequence belongs to the RapZ-like family.

Functionally, displays ATPase and GTPase activities. The polypeptide is Nucleotide-binding protein Swol_0262 (Syntrophomonas wolfei subsp. wolfei (strain DSM 2245B / Goettingen)).